The sequence spans 306 residues: UDP-3-O-acyl-N-acetylglucosamine deacetylase (306 aa).

Zn(2+) is bound by residues His79, His238, and Asp242. His265 acts as the Proton donor in catalysis.

This sequence belongs to the LpxC family. Requires Zn(2+) as cofactor.

It catalyses the reaction a UDP-3-O-[(3R)-3-hydroxyacyl]-N-acetyl-alpha-D-glucosamine + H2O = a UDP-3-O-[(3R)-3-hydroxyacyl]-alpha-D-glucosamine + acetate. Its pathway is glycolipid biosynthesis; lipid IV(A) biosynthesis; lipid IV(A) from (3R)-3-hydroxytetradecanoyl-[acyl-carrier-protein] and UDP-N-acetyl-alpha-D-glucosamine: step 2/6. In terms of biological role, catalyzes the hydrolysis of UDP-3-O-myristoyl-N-acetylglucosamine to form UDP-3-O-myristoylglucosamine and acetate, the committed step in lipid A biosynthesis. The polypeptide is UDP-3-O-acyl-N-acetylglucosamine deacetylase (Shewanella halifaxensis (strain HAW-EB4)).